Here is a 454-residue protein sequence, read N- to C-terminus: Chromosomal replication initiator protein DnaA (454 aa).

A domain I, interacts with DnaA modulators region spans residues 1 to 74 (MFDLDKFWQF…IQEAYAYADM (74 aa)). Residues 74–116 (MEIQPKFEVAGKEGPERLVTPQPRIKTNQEILENRRDEFAQDL) form a domain II region. The segment at 117 to 333 (QLNSKYTFDT…GALVKVQAHA (217 aa)) is domain III, AAA+ region. ATP is bound by residues Gly-161, Gly-163, Lys-164, and Thr-165. Positions 334 to 454 (TIEREDINVD…VYDLKAMLEH (121 aa)) are domain IV, binds dsDNA.

It belongs to the DnaA family. Oligomerizes as a right-handed, spiral filament on DNA at oriC.

Its subcellular location is the cytoplasm. In terms of biological role, plays an essential role in the initiation and regulation of chromosomal replication. ATP-DnaA binds to the origin of replication (oriC) to initiate formation of the DNA replication initiation complex once per cell cycle. Binds the DnaA box (a 9 base pair repeat at the origin) and separates the double-stranded (ds)DNA. Forms a right-handed helical filament on oriC DNA; dsDNA binds to the exterior of the filament while single-stranded (ss)DNA is stabiized in the filament's interior. The ATP-DnaA-oriC complex binds and stabilizes one strand of the AT-rich DNA unwinding element (DUE), permitting loading of DNA polymerase. After initiation quickly degrades to an ADP-DnaA complex that is not apt for DNA replication. Binds acidic phospholipids. This is Chromosomal replication initiator protein DnaA from Lactobacillus johnsonii (strain CNCM I-12250 / La1 / NCC 533).